Here is a 146-residue protein sequence, read N- to C-terminus: Hemoglobin subunit beta (146 aa).

The Globin domain maps to His-2–His-146. 2 residues coordinate heme b: His-63 and His-92.

Belongs to the globin family. As to quaternary structure, heterotetramer of two alpha chains and two beta chains. In terms of tissue distribution, red blood cells.

In terms of biological role, involved in oxygen transport from the lung to the various peripheral tissues. The polypeptide is Hemoglobin subunit beta (HBB) (Eudyptes chrysocome (Western rockhopper penguin)).